Reading from the N-terminus, the 297-residue chain is Nucleotide-binding protein BMA10229_A1510 (297 aa).

8–15 (GISGSGKS) contributes to the ATP binding site. GTP is bound at residue 57–60 (DARS).

Belongs to the RapZ-like family.

Displays ATPase and GTPase activities. The sequence is that of Nucleotide-binding protein BMA10229_A1510 from Burkholderia mallei (strain NCTC 10229).